The following is a 541-amino-acid chain: Methyl-accepting chemotaxis protein PcaY (541 aa).

The Cytoplasmic segment spans residues 1–10 (MLANLKIRTG). The helical transmembrane segment at 11-31 (MFWVLSLFSLTLLFSTASAWW) threads the bilayer. Over 32–189 (AAVGSDQQIT…ESDRRLARAQ (158 aa)) the chain is Periplasmic. Positions 35–187 (GSDQQITELD…MLESDRRLAR (153 aa)) are ligand-binding domain. The chain crosses the membrane as a helical span at residues 190 to 210 (LLSLCLLGMTVVLAVLCWAFI). Topologically, residues 211-541 (AQRVLHPLRE…MTALVGRFKV (331 aa)) are cytoplasmic. Residues 212 to 264 (QRVLHPLREAGGHFRRIASGDLSVPVQGQGNNEIGQLFHELQRMQQSQRDTLG) form the HAMP domain. The Methyl-accepting transducer domain occupies 269 to 505 (CARQLDAAAS…EVDRNLLNIR (237 aa)). The disordered stretch occupies residues 322–341 (TSQTTSESNQLAAQSRRQVS).

It belongs to the methyl-accepting chemotaxis (MCP) protein family.

It localises to the cell inner membrane. Functionally, chemotactic-signal transducers respond to changes in the concentration of attractants and repellents in the environment, transduce a signal from the outside to the inside of the cell, and facilitate sensory adaptation through the variation of the level of methylation. PcaY is responsible for the detection of multiple aromatic and hydroaromatic compounds that are metabolized through the beta-ketoadipate catabolic pathway, including vanillin, vanillate, 4-hydroxybenzoate (4-HBA), benzoate and protocatechuate. It also senses several nonmetabolizable aromatic compounds. This is Methyl-accepting chemotaxis protein PcaY from Pseudomonas putida (strain ATCC 700007 / DSM 6899 / JCM 31910 / BCRC 17059 / LMG 24140 / F1).